We begin with the raw amino-acid sequence, 789 residues long: Probable phosphoketolase 1 (789 aa).

Belongs to the XFP family. Thiamine diphosphate serves as cofactor.

The chain is Probable phosphoketolase 1 from Rhizobium meliloti (strain 1021) (Ensifer meliloti).